The following is a 287-amino-acid chain: ATP synthase gamma chain (287 aa).

It belongs to the ATPase gamma chain family. F-type ATPases have 2 components, CF(1) - the catalytic core - and CF(0) - the membrane proton channel. CF(1) has five subunits: alpha(3), beta(3), gamma(1), delta(1), epsilon(1). CF(0) has three main subunits: a, b and c.

It localises to the cell membrane. Produces ATP from ADP in the presence of a proton gradient across the membrane. The gamma chain is believed to be important in regulating ATPase activity and the flow of protons through the CF(0) complex. The sequence is that of ATP synthase gamma chain from Staphylococcus carnosus (strain TM300).